Consider the following 658-residue polypeptide: Pentatricopeptide repeat-containing protein 7, mitochondrial (658 aa).

The transit peptide at 1-29 (MRNCVSPLLFAWTKHLRLREFKIPFPNRL) directs the protein to the mitochondrion. 2 PPR repeats span residues 130–164 (VKKR…TPIW) and 220–254 (LYVE…SESL).

It is found in the mitochondrion. In terms of biological role, mitochondrial RNA-binding protein required for the stability of the atp6 mRNA. This chain is Pentatricopeptide repeat-containing protein 7, mitochondrial (ppr7), found in Schizosaccharomyces pombe (strain 972 / ATCC 24843) (Fission yeast).